A 537-amino-acid polypeptide reads, in one-letter code: Cytochrome P450 CYP12A2 (537 aa).

Cysteine 483 serves as a coordination point for heme.

Belongs to the cytochrome P450 family. Requires heme as cofactor.

In Musca domestica (House fly), this protein is Cytochrome P450 CYP12A2 (CYP12A2).